The sequence spans 124 residues: Large ribosomal subunit protein bL12 (124 aa).

It belongs to the bacterial ribosomal protein bL12 family. Homodimer. Part of the ribosomal stalk of the 50S ribosomal subunit. Forms a multimeric L10(L12)X complex, where L10 forms an elongated spine to which 2 to 4 L12 dimers bind in a sequential fashion. Binds GTP-bound translation factors.

Its function is as follows. Forms part of the ribosomal stalk which helps the ribosome interact with GTP-bound translation factors. Is thus essential for accurate translation. The chain is Large ribosomal subunit protein bL12 from Desulfitobacterium hafniense (strain DSM 10664 / DCB-2).